A 132-amino-acid polypeptide reads, in one-letter code: Small ribosomal subunit protein uS11 (132 aa).

Basic residues predominate over residues 1–16; that stretch reads MAAGMKGKRSRRRKER. The segment at 1-20 is disordered; it reads MAAGMKGKRSRRRKERKNVE.

Belongs to the universal ribosomal protein uS11 family. Part of the 30S ribosomal subunit. Interacts with proteins S7 and S18. Binds to IF-3.

Its function is as follows. Located on the platform of the 30S subunit, it bridges several disparate RNA helices of the 16S rRNA. Forms part of the Shine-Dalgarno cleft in the 70S ribosome. The protein is Small ribosomal subunit protein uS11 of Clostridium botulinum (strain Hall / ATCC 3502 / NCTC 13319 / Type A).